Reading from the N-terminus, the 209-residue chain is Small ribosomal subunit protein eS1 (209 aa).

The protein belongs to the eukaryotic ribosomal protein eS1 family.

This chain is Small ribosomal subunit protein eS1, found in Picrophilus torridus (strain ATCC 700027 / DSM 9790 / JCM 10055 / NBRC 100828 / KAW 2/3).